We begin with the raw amino-acid sequence, 205 residues long: RPW8-like protein 2 (205 aa).

An RPW8 domain is found at 1–153 (MPLTEIIAGA…IMGQPIDCII (153 aa)). Residues 7 to 23 (IAGAALGLALQILHEAI) form a helical membrane-spanning segment. Coiled coils occupy residues 70 to 92 (EDLK…LKRR) and 125 to 147 (ADIK…IMGQ).

Belongs to the plant RPW8 protein family.

The protein localises to the membrane. Its function is as follows. Probable disease resistance (R) protein. The protein is RPW8-like protein 2 of Arabidopsis thaliana (Mouse-ear cress).